A 290-amino-acid polypeptide reads, in one-letter code: Acetylglutamate kinase (290 aa).

Substrate-binding positions include 64–65, Arg86, and Asn183; that span reads GG.

Belongs to the acetylglutamate kinase family. ArgB subfamily.

It is found in the cytoplasm. It carries out the reaction N-acetyl-L-glutamate + ATP = N-acetyl-L-glutamyl 5-phosphate + ADP. It participates in amino-acid biosynthesis; L-arginine biosynthesis; N(2)-acetyl-L-ornithine from L-glutamate: step 2/4. Functionally, catalyzes the ATP-dependent phosphorylation of N-acetyl-L-glutamate. This Halothermothrix orenii (strain H 168 / OCM 544 / DSM 9562) protein is Acetylglutamate kinase.